The following is a 247-amino-acid chain: F-box and leucine-rich protein 22 (247 aa).

The region spanning 6-52 is the F-box domain; that stretch reads TMHITQLNRECLLHLFSFLDKDSRKSLARTCSQLHDVFEDPALWSLL. Disordered stretches follow at residues 124–154 and 173–247; these read SPRR…PDHS and GLGS…AFPQ. Positions 184-200 are enriched in pro residues; sequence ETPPAPGVSWGPPPPGA.

As to quaternary structure, directly interacts with SKP1 and CUL1. As to expression, enriched in cardiac muscle.

The protein resides in the cytoplasm. It localises to the myofibril. Its subcellular location is the sarcomere. It is found in the z line. Its pathway is protein modification; protein ubiquitination. In terms of biological role, substrate-recognition component of the SCF (SKP1-CUL1-F-box protein)-type E3 ubiquitin ligase complex. Promotes ubiquitination of sarcomeric proteins alpha-actinin-2 (ACTN2) and filamin-C (FLNC). The chain is F-box and leucine-rich protein 22 (FBXL22) from Homo sapiens (Human).